We begin with the raw amino-acid sequence, 248 residues long: Small ribosomal subunit protein uS3 (248 aa).

One can recognise a KH type-2 domain in the interval 38-106 (VREYLVKTLD…QVALNILEVK (69 aa)). The segment covering 213-230 (ESEINAPAERRGRGDRNG) has biased composition (basic and acidic residues). Residues 213–248 (ESEINAPAERRGRGDRNGRPRRGGQRRQRSEQKQEG) form a disordered region.

It belongs to the universal ribosomal protein uS3 family. As to quaternary structure, part of the 30S ribosomal subunit. Forms a tight complex with proteins S10 and S14.

Its function is as follows. Binds the lower part of the 30S subunit head. Binds mRNA in the 70S ribosome, positioning it for translation. The sequence is that of Small ribosomal subunit protein uS3 from Corynebacterium diphtheriae (strain ATCC 700971 / NCTC 13129 / Biotype gravis).